The chain runs to 288 residues: Homeobox protein Hox-B4a (288 aa).

A disordered region spans residues 10–136 (SNYVDPKFPP…ASSPASTRKD (127 aa)). Over residues 118 to 132 (CGQTPHSQGASSPAS) the composition is skewed to polar residues. Positions 139 to 144 (VYPWMK) match the Antp-type hexapeptide motif. A DNA-binding region (homeobox) is located at residues 160–219 (PKRSRTAYTRQQVLELEKEFHYNRYLTRRRRVEIAHTLCLSERQIKIWFQNRRMKWKKDH).

Belongs to the Antp homeobox family. Deformed subfamily.

It is found in the nucleus. Sequence-specific transcription factor which is part of a developmental regulatory system that provides cells with specific positional identities on the anterior-posterior axis. This chain is Homeobox protein Hox-B4a (hoxb4a), found in Takifugu rubripes (Japanese pufferfish).